The chain runs to 102 residues: ATP-dependent Clp protease adapter protein ClpS (102 aa).

The protein belongs to the ClpS family. In terms of assembly, binds to the N-terminal domain of the chaperone ClpA.

Functionally, involved in the modulation of the specificity of the ClpAP-mediated ATP-dependent protein degradation. The chain is ATP-dependent Clp protease adapter protein ClpS from Shewanella amazonensis (strain ATCC BAA-1098 / SB2B).